An 86-amino-acid polypeptide reads, in one-letter code: MAKKSPENASPVAQFEQSLESLEQLVEQMETGELSLEASLSAYERGVGLYRQCQQALEQAELRVRLLSDPAQPEASEPFDPPSHDG.

Residues 67-86 (LSDPAQPEASEPFDPPSHDG) are disordered.

It belongs to the XseB family. As to quaternary structure, heterooligomer composed of large and small subunits.

The protein localises to the cytoplasm. It catalyses the reaction Exonucleolytic cleavage in either 5'- to 3'- or 3'- to 5'-direction to yield nucleoside 5'-phosphates.. Its function is as follows. Bidirectionally degrades single-stranded DNA into large acid-insoluble oligonucleotides, which are then degraded further into small acid-soluble oligonucleotides. The protein is Exodeoxyribonuclease 7 small subunit of Stenotrophomonas maltophilia (strain K279a).